Consider the following 248-residue polypeptide: Triosephosphate isomerase (248 aa).

Substrate-binding residues include asparagine 12 and lysine 14. An igE-binding region spans residues 16-30 (NGDRAGIDSIISFMK). Catalysis depends on histidine 95, which acts as the Electrophile. Catalysis depends on glutamate 165, which acts as the Proton acceptor. IgE-binding regions lie at residues 166-180 (PVWAIGTGKTATPEQ) and 205-219 (RIIYGGSVTPGNCKE).

Belongs to the triosephosphate isomerase family. As to quaternary structure, homodimer. Expressed in skeletal muscle (at protein level).

Its subcellular location is the cytoplasm. The catalysed reaction is D-glyceraldehyde 3-phosphate = dihydroxyacetone phosphate. The enzyme catalyses dihydroxyacetone phosphate = methylglyoxal + phosphate. Its pathway is carbohydrate biosynthesis; gluconeogenesis. It participates in carbohydrate degradation; glycolysis; D-glyceraldehyde 3-phosphate from glycerone phosphate: step 1/1. Functionally, triosephosphate isomerase is an extremely efficient metabolic enzyme that catalyzes the interconversion between dihydroxyacetone phosphate (DHAP) and D-glyceraldehyde-3-phosphate (G3P) in glycolysis and gluconeogenesis. It is also responsible for the non-negligible production of methylglyoxal a reactive cytotoxic side-product that modifies and can alter proteins, DNA and lipids. This Procambarus clarkii (Red swamp crayfish) protein is Triosephosphate isomerase.